The following is a 156-amino-acid chain: Aspartate carbamoyltransferase regulatory chain (156 aa).

Zn(2+) contacts are provided by Cys-109, Cys-114, Cys-138, and Cys-141.

Belongs to the PyrI family. As to quaternary structure, contains catalytic and regulatory chains. Zn(2+) is required as a cofactor.

Functionally, involved in allosteric regulation of aspartate carbamoyltransferase. The protein is Aspartate carbamoyltransferase regulatory chain of Baumannia cicadellinicola subsp. Homalodisca coagulata.